The sequence spans 215 residues: Chaperone protein TorD (215 aa).

Belongs to the TorD/DmsD family. TorD subfamily.

It localises to the cytoplasm. In terms of biological role, involved in the biogenesis of TorA. Acts on TorA before the insertion of the molybdenum cofactor and, as a result, probably favors a conformation of the apoenzyme that is competent for acquiring the cofactor. The polypeptide is Chaperone protein TorD (Aliivibrio fischeri (strain ATCC 700601 / ES114) (Vibrio fischeri)).